Consider the following 188-residue polypeptide: PRA1 family protein 3 (188 aa).

Position 1 is an N-acetylmethionine (methionine 1). Residues 1–35 (MDVNIAPLRAWDDFFPGSDRFARPDFRDISKWNNR) lie on the Cytoplasmic side of the membrane. Helical transmembrane passes span 36–56 (VVSNLLYYQTNYLVVAAMMIS) and 57–77 (VVGFLSPFNMILGGIVVVLVF). Over 78-93 (TGFVWAAHNKDILRRM) the chain is Cytoplasmic. Helical transmembrane passes span 94 to 114 (KKQYPTAFVMVVMLASYFLIS) and 115 to 135 (LFGGVMVFVFGITFPLLLMFI). Positions 103 to 117 (MVVMLASYFLISLFG) are required for homodimer formation and heterodimer formation with ARL6IP1. Residues 136 to 188 (HASLRLRNLKNKLENKMEEIGLKRTPMGIVLDALEQQEETITKFSDYISKMKE) lie on the Cytoplasmic side of the membrane. A targeting to endoplasmic reticulum membrane region spans residues 136-188 (HASLRLRNLKNKLENKMEEIGLKRTPMGIVLDALEQQEETITKFSDYISKMKE).

The protein belongs to the PRA1 family. Homodimer. Heterodimer with ARL6IP1. Forms multimers. Interacts with ARL6. Interacts with prenylated RAB1A and RAB3A. Interacts with SLC1A1/EAAC1. Interacts with RTN2 (via first transmembrane domain). Does not interact with VAMP1, VAMP2 or VAMP3.

It localises to the endoplasmic reticulum membrane. Its subcellular location is the cell membrane. The protein resides in the cytoplasm. The protein localises to the cytoskeleton. Functionally, regulates intracellular concentrations of taurine and glutamate. Negatively modulates SLC1A1/EAAC1 glutamate transport activity by decreasing its affinity for glutamate in a PKC activity-dependent manner. Plays a role in the retention of SLC1A1/EAAC1 in the endoplasmic reticulum. The chain is PRA1 family protein 3 (ARL6IP5) from Bos taurus (Bovine).